The sequence spans 401 residues: Chaperone protein DnaJ (401 aa).

Residues 4–69 (DYYEVLGVSR…DKRRRYDQFG (66 aa)) enclose the J domain. The CR-type zinc-finger motif lies at 156–237 (GVEKTLKIKK…CYGEGIKQGD (82 aa)). Cys169, Cys172, Cys185, Cys188, Cys211, Cys214, Cys225, and Cys228 together coordinate Zn(2+). CXXCXGXG motif repeat units lie at residues 169 to 176 (CKECNGSG), 185 to 192 (CQTCHGSG), 211 to 218 (CPTCGGEG), and 225 to 232 (CTACYGEG). Positions 377 to 401 (AFSPSGSNNDKEEKSFFEKARDIFS) are disordered. Over residues 385–401 (NDKEEKSFFEKARDIFS) the composition is skewed to basic and acidic residues.

The protein belongs to the DnaJ family. As to quaternary structure, homodimer. The cofactor is Zn(2+).

The protein resides in the cytoplasm. Its function is as follows. Participates actively in the response to hyperosmotic and heat shock by preventing the aggregation of stress-denatured proteins and by disaggregating proteins, also in an autonomous, DnaK-independent fashion. Unfolded proteins bind initially to DnaJ; upon interaction with the DnaJ-bound protein, DnaK hydrolyzes its bound ATP, resulting in the formation of a stable complex. GrpE releases ADP from DnaK; ATP binding to DnaK triggers the release of the substrate protein, thus completing the reaction cycle. Several rounds of ATP-dependent interactions between DnaJ, DnaK and GrpE are required for fully efficient folding. Also involved, together with DnaK and GrpE, in the DNA replication of plasmids through activation of initiation proteins. The polypeptide is Chaperone protein DnaJ (Chlorobium limicola (strain DSM 245 / NBRC 103803 / 6330)).